Consider the following 310-residue polypeptide: Ribosomal RNA small subunit methyltransferase H (310 aa).

Residues 32–34, aspartate 52, phenylalanine 79, aspartate 100, and glutamine 107 contribute to the S-adenosyl-L-methionine site; that span reads AGH.

Belongs to the methyltransferase superfamily. RsmH family.

It is found in the cytoplasm. The enzyme catalyses cytidine(1402) in 16S rRNA + S-adenosyl-L-methionine = N(4)-methylcytidine(1402) in 16S rRNA + S-adenosyl-L-homocysteine + H(+). In terms of biological role, specifically methylates the N4 position of cytidine in position 1402 (C1402) of 16S rRNA. The polypeptide is Ribosomal RNA small subunit methyltransferase H (Bacillus pumilus (strain SAFR-032)).